The chain runs to 236 residues: DNA repair protein RecO (236 aa).

This sequence belongs to the RecO family.

In terms of biological role, involved in DNA repair and RecF pathway recombination. This Haemophilus influenzae (strain PittGG) protein is DNA repair protein RecO.